The sequence spans 351 residues: Dihydroorotate dehydrogenase (quinone) (351 aa).

FMN contacts are provided by residues A61–K65 and T85. K65 provides a ligand contact to substrate. N110–F114 is a substrate binding site. FMN-binding residues include N139 and N172. N172 lines the substrate pocket. Catalysis depends on S175, which acts as the Nucleophile. N177 provides a ligand contact to substrate. 2 residues coordinate FMN: K217 and T245. N246–T247 contributes to the substrate binding site. FMN is bound by residues G268, G297, and Y318–S319.

This sequence belongs to the dihydroorotate dehydrogenase family. Type 2 subfamily. As to quaternary structure, monomer. FMN serves as cofactor.

The protein localises to the cell membrane. It catalyses the reaction (S)-dihydroorotate + a quinone = orotate + a quinol. It functions in the pathway pyrimidine metabolism; UMP biosynthesis via de novo pathway; orotate from (S)-dihydroorotate (quinone route): step 1/1. Its function is as follows. Catalyzes the conversion of dihydroorotate to orotate with quinone as electron acceptor. This chain is Dihydroorotate dehydrogenase (quinone), found in Stenotrophomonas maltophilia (strain K279a).